The sequence spans 154 residues: uncharacterized protein (154 aa).

This is an uncharacterized protein from Bacillus subtilis (strain 168).